Here is a 776-residue protein sequence, read N- to C-terminus: MSINLTLDIYIYFLNNARSLCGKQRSKQLHFVCSKQYWRMNHVNVHREFHTSKKSCKWNRSEAHCSKHWHSPSNHGLHFGIVRLSTSAPKGLTKVSIHMSRIKSTLNSVSKAIFGSQNEMVTRLAQFKPSSRILRKVSDKGWLKQKNVKQAVESLKNYSDKSAGKNSLAEQKSYFADKEEDSGKHSLFHYTYGITTRFGESFSVLANHINSYFKSKGKMSQTKEDKQLQDKPDLEERKSSSPGPDTVADRPDSESPLEVKDKLSSPTQMPEAHPVSAKQSIANFLSRPTEGVQALVGGYIGGLVPKLKSDPKSPPEEQEVSAKTEQAVNKDKKAEEKKRVLLQQEKIIARVSIDNRTRALVQALRRTADPKLCITRVEELTFHLLEFPEGKGVAIKEKIIPYLLRLRQVKDETLQAAVREILALIGYVDPVKGRGIRILTIDGGGTRGVVALQTLRKLVELTQKPIHQLFDYICGVSTGAILAFMLGLFHMPLDECEELYRKLGSDVFTQNVIVGTVKMSWSHAFYDSNTWEKILKDRIGSALMIETARNPACPKVAAISTIVNRGQTPKAFVFRNYGHFPGTNSHYLGGCQYKMWQAIRASSAAPGYFAEYALGSDLHQDGGLLLNNPSALALHECKCIWPDTPLECIVSLGTGRYESDVRNTSTYTSLKTKLSNVISSATDTEEVHIMLDGLLPSDTYFRFNPVICENIPLDESRDEKLDQLQLEGMKYIERNDQKMKKVAKILSQEKTTLQKINDWIKLKSDMYEGLPFFSKL.

2 N-linked (GlcNAc...) asparagine glycosylation sites follow: asparagine 4 and asparagine 157. 2 disordered regions span residues 216–276 (KGKM…HPVS) and 306–334 (KLKS…DKKA). Basic and acidic residues-rich tracts occupy residues 221–239 (QTKE…ERKS) and 247–263 (VADR…KDKL). In terms of domain architecture, PNPLA spans 439–634 (LTIDGGGTRG…LLNNPSALAL (196 aa)). The short motif at 443–448 (GGGTRG) is the GXGXXG element. Residues 469 to 489 (LFDYICGVSTGAILAFMLGLF) traverse the membrane as a helical segment. Residues 475–479 (GVSTG) carry the GXSXG motif. Catalysis depends on serine 477, which acts as the Nucleophile. Aspartate 621 functions as the Proton acceptor in the catalytic mechanism. The DGA/G signature appears at 621 to 623 (DGG). An N6-succinyllysine modification is found at lysine 730.

In terms of tissue distribution, expressed in myocardium (at protein level).

Its subcellular location is the endoplasmic reticulum membrane. The protein resides in the mitochondrion membrane. The protein localises to the peroxisome membrane. The enzyme catalyses a 1,2-diacyl-sn-glycero-3-phosphocholine + H2O = a 1-acyl-sn-glycero-3-phosphocholine + a fatty acid + H(+). The catalysed reaction is a 1,2-diacyl-sn-glycero-3-phosphocholine + H2O = a 2-acyl-sn-glycero-3-phosphocholine + a fatty acid + H(+). It catalyses the reaction a 1,2-diacyl-sn-glycero-3-phosphoethanolamine + H2O = a 1-acyl-sn-glycero-3-phosphoethanolamine + a fatty acid + H(+). It carries out the reaction a 1-O-(1Z-alkenyl)-2-acyl-sn-glycero-3-phosphocholine + H2O = a 1-O-(1Z-alkenyl)-sn-glycero-3-phosphocholine + a fatty acid + H(+). The enzyme catalyses a 1-acyl-sn-glycero-3-phosphocholine + H2O = sn-glycerol 3-phosphocholine + a fatty acid + H(+). The catalysed reaction is 1-hexadecanoyl-2-(5Z,8Z,11Z,14Z-eicosatetraenoyl)-sn-glycero-3-phosphocholine + H2O = 2-(5Z,8Z,11Z,14Z)-eicosatetraenoyl-sn-glycero-3-phosphocholine + hexadecanoate + H(+). It catalyses the reaction 1-acyl-2-(9Z,12Z)-octadecadienoyl-sn-glycero-3-phosphocholine + H2O = a 1-acyl-sn-glycero-3-phosphocholine + (9Z,12Z)-octadecadienoate + H(+). It carries out the reaction 1-acyl-2-(5Z,8Z,11Z,14Z-eicosatetraenoyl)-sn-glycero-3-phosphocholine + H2O = a 1-acyl-sn-glycero-3-phosphocholine + (5Z,8Z,11Z,14Z)-eicosatetraenoate + H(+). The enzyme catalyses 1-hexadecanoyl-2-(5Z,8Z,11Z,14Z-eicosatetraenoyl)-sn-glycero-3-phosphocholine + H2O = 1-hexadecanoyl-sn-glycero-3-phosphocholine + (5Z,8Z,11Z,14Z)-eicosatetraenoate + H(+). The catalysed reaction is 1-octadecanoyl-2-(9Z-octadecenoyl)-sn-glycero-3-phosphocholine + H2O = 1-octadecanoyl-sn-glycero-3-phosphocholine + (9Z)-octadecenoate + H(+). It catalyses the reaction 1-hexadecanoyl-2-(9Z-octadecenoyl)-sn-glycero-3-phosphocholine + H2O = 1-hexadecanoyl-sn-glycero-3-phosphocholine + (9Z)-octadecenoate + H(+). It carries out the reaction 1-hexadecanoyl-2-(9Z,12Z-octadecadienoyl)-sn-glycero-3-phosphocholine + H2O = (9Z,12Z)-octadecadienoate + 1-hexadecanoyl-sn-glycero-3-phosphocholine + H(+). The enzyme catalyses 1-acyl-2-(9Z,12Z)-octadecadienoyl-sn-glycero-3-phosphoethanolamine + H2O = a 1-acyl-sn-glycero-3-phosphoethanolamine + (9Z,12Z)-octadecadienoate + H(+). The catalysed reaction is 1-acyl-2-(5Z,8Z,11Z,14Z)-eicosatetraenoyl-sn-glycero-3-phosphoethanolamine + H2O = a 1-acyl-sn-glycero-3-phosphoethanolamine + (5Z,8Z,11Z,14Z)-eicosatetraenoate + H(+). It catalyses the reaction 1-hexadecanoyl-2-(5Z,8Z,11Z,14Z-eicosatetraenoyl)-sn-glycero-3-phosphoethanolamine + H2O = 1-hexadecanoyl-sn-glycero-3-phosphoethanolamine + (5Z,8Z,11Z,14Z)-eicosatetraenoate + H(+). It carries out the reaction 1-octadecanoyl-2-(9Z-octadecenoyl)-sn-glycero-3-phosphocholine + H2O = 2-(9Z-octadecenoyl)-sn-glycero-3-phosphocholine + octadecanoate + H(+). The enzyme catalyses 1-hexadecanoyl-2-(4Z,7Z,10Z,13Z,16Z,19Z-docosahexaenoyl)-sn-glycero-3-phosphocholine + H2O = 2-(4Z,7Z,10Z,13Z,16Z,19Z-docosahexaenoyl)-sn-glycero-3-phosphocholine + hexadecanoate + H(+). The catalysed reaction is 1-O-(1Z)-hexadecenyl-2 (5Z,8Z,11Z,14Z)-eicosatetraenoyl-sn-glycero-3-phosphocholine + H2O = 1-(1Z-hexadecenyl)-sn-glycero-3-phosphocholine + (5Z,8Z,11Z,14Z)-eicosatetraenoate + H(+). It catalyses the reaction 1-O-(1Z-hexadecenyl)-2-(9Z-octadecenoyl)-sn-glycero-3-phosphocholine + H2O = 1-(1Z-hexadecenyl)-sn-glycero-3-phosphocholine + (9Z)-octadecenoate + H(+). It carries out the reaction 1-hexadecanoyl-sn-glycero-3-phosphocholine + H2O = sn-glycerol 3-phosphocholine + hexadecanoate + H(+). The enzyme catalyses 1',3'-bis-[1,2-di-(9Z,12Z-octadecadienoyl)-sn-glycero-3-phospho]-glycerol + H2O = 1'-[1,2-di-(9Z,12Z-octadecadienoyl)-sn-glycero-3-phospho]-3'-[1-(9Z,12Z-octadecadienoyl)-sn-glycero-3-phospho]-glycerol + (9Z,12Z)-octadecadienoate + H(+). The catalysed reaction is 1'-[1-acyl-2-(9-hydroxy-(10E,12Z)-octadecadienoyl)-sn-glycero-3-phospho]-3'-[1,2-diacyl-sn-glycero-3-phospho]-glycerol + H2O = 9-hydroxy-(10E,12Z)-octadecadienoate + 1'-[1,2-diacyl-sn-glycero-3-phospho],3'-[1-acyl-sn-glycero-3-phospho]-glycerol + H(+). It participates in phospholipid metabolism. With respect to regulation, calcium-independent phospholipase. Its function is as follows. Calcium-independent and membrane-bound phospholipase, that catalyzes the esterolytic cleavage of fatty acids from glycerophospholipids to yield free fatty acids and lysophospholipids, hence regulating membrane physical properties and the release of lipid second messengers and growth factors. Hydrolyzes phosphatidylethanolamine, phosphatidylcholine and probably phosphatidylinositol with a possible preference for the former. Also has a broad substrate specificity in terms of fatty acid moieties, hydrolyzing saturated and mono-unsaturated fatty acids at nearly equal rates from either the sn-1 or sn-2 position in diacyl phosphatidylcholine. However, has a weak activity toward polyunsaturated fatty acids at the sn-2 position, and thereby favors the production of 2-arachidonoyl lysophosphatidylcholine, a key branch point metabolite in eicosanoid signaling. On the other hand, can produce arachidonic acid from the sn-1 position of diacyl phospholipid and from the sn-2 position of arachidonate-containing plasmalogen substrates. Therefore, plays an important role in the mobilization of arachidonic acid in response to cellular stimuli and the generation of lipid second messengers. Can also hydrolyze lysophosphatidylcholine. In the mitochondrial compartment, catalyzes the hydrolysis and release of oxidized aliphatic chains from cardiolipin and integrates mitochondrial bioenergetics and signaling. It is essential for maintaining efficient bioenergetic mitochondrial function through tailoring mitochondrial membrane lipid metabolism and composition. In Mus musculus (Mouse), this protein is Calcium-independent phospholipase A2-gamma.